We begin with the raw amino-acid sequence, 184 residues long: Large ribosomal subunit protein uL5 (184 aa).

The protein belongs to the universal ribosomal protein uL5 family. Part of the 50S ribosomal subunit; part of the 5S rRNA/L5/L18/L25 subcomplex. Contacts the 5S rRNA and the P site tRNA. Forms a bridge to the 30S subunit in the 70S ribosome.

In terms of biological role, this is one of the proteins that bind and probably mediate the attachment of the 5S RNA into the large ribosomal subunit, where it forms part of the central protuberance. In the 70S ribosome it contacts protein S13 of the 30S subunit (bridge B1b), connecting the 2 subunits; this bridge is implicated in subunit movement. Contacts the P site tRNA; the 5S rRNA and some of its associated proteins might help stabilize positioning of ribosome-bound tRNAs. The sequence is that of Large ribosomal subunit protein uL5 from Thermotoga sp. (strain RQ2).